A 316-amino-acid chain; its full sequence is L-lactate dehydrogenase (316 aa).

NAD(+)-binding positions include Val-15, Asp-37, Lys-42, Tyr-68, and 82–83; that span reads GL. Substrate-binding positions include Gln-85, Arg-91, and 123-126; that span reads NPVD. NAD(+) contacts are provided by residues 121–123 and Thr-146; that span reads ASN. 151–154 contributes to the substrate binding site; it reads DTSR. The beta-D-fructose 1,6-bisphosphate site is built by Arg-156 and His-171. His-178 functions as the Proton acceptor in the catalytic mechanism. Tyr-222 bears the Phosphotyrosine mark. Thr-231 is a binding site for substrate.

It belongs to the LDH/MDH superfamily. LDH family. Homotetramer.

Its subcellular location is the cytoplasm. It carries out the reaction (S)-lactate + NAD(+) = pyruvate + NADH + H(+). It functions in the pathway fermentation; pyruvate fermentation to lactate; (S)-lactate from pyruvate: step 1/1. Allosterically activated by fructose 1,6-bisphosphate (FBP). Catalyzes the conversion of lactate to pyruvate. The protein is L-lactate dehydrogenase of Borrelia hermsii (strain HS1 / DAH).